The primary structure comprises 194 residues: Peptidyl-tRNA hydrolase (194 aa).

A tRNA-binding site is contributed by Tyr-16. His-21 serves as the catalytic Proton acceptor. TRNA is bound by residues Phe-67, Asn-69, and Asn-115.

The protein belongs to the PTH family. As to quaternary structure, monomer.

The protein resides in the cytoplasm. The enzyme catalyses an N-acyl-L-alpha-aminoacyl-tRNA + H2O = an N-acyl-L-amino acid + a tRNA + H(+). Hydrolyzes ribosome-free peptidyl-tRNAs (with 1 or more amino acids incorporated), which drop off the ribosome during protein synthesis, or as a result of ribosome stalling. Its function is as follows. Catalyzes the release of premature peptidyl moieties from peptidyl-tRNA molecules trapped in stalled 50S ribosomal subunits, and thus maintains levels of free tRNAs and 50S ribosomes. The protein is Peptidyl-tRNA hydrolase of Shigella boydii serotype 18 (strain CDC 3083-94 / BS512).